We begin with the raw amino-acid sequence, 179 residues long: Small ribosomal subunit protein uS5c (179 aa).

The S5 DRBM domain maps to 26-89 (FVERLIKISR…TDGRKNLIDV (64 aa)).

The protein belongs to the universal ribosomal protein uS5 family. Part of the 30S ribosomal subunit. Contacts protein S4.

Its subcellular location is the plastid. The protein resides in the chloroplast. With S4 and S12 plays an important role in translational accuracy. This Thalassiosira pseudonana (Marine diatom) protein is Small ribosomal subunit protein uS5c (rps5).